The following is a 249-amino-acid chain: Ubiquinone/menaquinone biosynthesis C-methyltransferase UbiE (249 aa).

S-adenosyl-L-methionine contacts are provided by residues threonine 72, aspartate 93, and 121-122; that span reads DA.

The protein belongs to the class I-like SAM-binding methyltransferase superfamily. MenG/UbiE family.

It catalyses the reaction a 2-demethylmenaquinol + S-adenosyl-L-methionine = a menaquinol + S-adenosyl-L-homocysteine + H(+). The catalysed reaction is a 2-methoxy-6-(all-trans-polyprenyl)benzene-1,4-diol + S-adenosyl-L-methionine = a 5-methoxy-2-methyl-3-(all-trans-polyprenyl)benzene-1,4-diol + S-adenosyl-L-homocysteine + H(+). It participates in quinol/quinone metabolism; menaquinone biosynthesis; menaquinol from 1,4-dihydroxy-2-naphthoate: step 2/2. It functions in the pathway cofactor biosynthesis; ubiquinone biosynthesis. Methyltransferase required for the conversion of demethylmenaquinol (DMKH2) to menaquinol (MKH2) and the conversion of 2-polyprenyl-6-methoxy-1,4-benzoquinol (DDMQH2) to 2-polyprenyl-3-methyl-6-methoxy-1,4-benzoquinol (DMQH2). The protein is Ubiquinone/menaquinone biosynthesis C-methyltransferase UbiE of Cellvibrio japonicus (strain Ueda107) (Pseudomonas fluorescens subsp. cellulosa).